Here is a 127-residue protein sequence, read N- to C-terminus: Small ribosomal subunit protein uS13 (127 aa).

Residues 95–118 (GLPVRGQRTHTNARTRKGPKKGLV) are compositionally biased toward basic residues. Residues 95–127 (GLPVRGQRTHTNARTRKGPKKGLVRKAAAPAPK) form a disordered region.

The protein belongs to the universal ribosomal protein uS13 family. Part of the 30S ribosomal subunit. Forms a loose heterodimer with protein S19. Forms two bridges to the 50S subunit in the 70S ribosome.

Located at the top of the head of the 30S subunit, it contacts several helices of the 16S rRNA. In the 70S ribosome it contacts the 23S rRNA (bridge B1a) and protein L5 of the 50S subunit (bridge B1b), connecting the 2 subunits; these bridges are implicated in subunit movement. Contacts the tRNAs in the A and P-sites. This Anaeromyxobacter sp. (strain Fw109-5) protein is Small ribosomal subunit protein uS13.